The primary structure comprises 1342 residues: DNA-directed RNA polymerase subunit beta (1342 aa).

The protein belongs to the RNA polymerase beta chain family. In terms of assembly, the RNAP catalytic core consists of 2 alpha, 1 beta, 1 beta' and 1 omega subunit. When a sigma factor is associated with the core the holoenzyme is formed, which can initiate transcription.

The enzyme catalyses RNA(n) + a ribonucleoside 5'-triphosphate = RNA(n+1) + diphosphate. DNA-dependent RNA polymerase catalyzes the transcription of DNA into RNA using the four ribonucleoside triphosphates as substrates. This Pasteurella multocida (strain Pm70) protein is DNA-directed RNA polymerase subunit beta.